Consider the following 369-residue polypeptide: tRNA pseudouridine synthase D (369 aa).

Catalysis depends on aspartate 80, which acts as the Nucleophile. Residues 156 to 318 (GIPNWFGEQR…LKQERRALRL (163 aa)) form the TRUD domain.

This sequence belongs to the pseudouridine synthase TruD family.

It carries out the reaction uridine(13) in tRNA = pseudouridine(13) in tRNA. Responsible for synthesis of pseudouridine from uracil-13 in transfer RNAs. The protein is tRNA pseudouridine synthase D of Xanthomonas oryzae pv. oryzae (strain KACC10331 / KXO85).